A 336-amino-acid polypeptide reads, in one-letter code: Uridine nucleosidase 1 (336 aa).

Active-site residues include Asp29 and His260.

The protein belongs to the IUNH family. As to quaternary structure, homodimer. Component of the NSH heterocomplex made of URH1/NSH1 and URH2/NSH2 which exhibits strong xanthosine nucleosidase activity. Interacts with URH2. In terms of tissue distribution, expressed ubiquitously in leaves, flowers, stems, pollen cells, root tip meristem and root vasculature.

The protein localises to the cytoplasm. The enzyme catalyses uridine + H2O = D-ribose + uracil. The catalysed reaction is xanthosine + H2O = D-ribose + xanthine. It catalyses the reaction inosine + H2O = hypoxanthine + D-ribose. It carries out the reaction adenosine + H2O = D-ribose + adenine. Its function is as follows. Involved in purine and pyrimidine breakdown rather than in pyrimidine salvage, especially in response to dark stress. Together with URH2, required for efficient inosine and xanthosine hydrolytic activities. Unable to use cytidine as a substrate. Can use uridine, inosine, adenosine as well as the cytokinin derivative isopentenyladenine-riboside as substrates. Also hydrolyzes xanthosine with high efficiency. In Arabidopsis thaliana (Mouse-ear cress), this protein is Uridine nucleosidase 1.